The primary structure comprises 118 residues: Late cornified envelope protein 1F (118 aa).

Residues 1-10 (MSCQQSQQQC) show a composition bias toward low complexity. Disordered regions lie at residues 1-23 (MSCQ…CPPK) and 82-118 (RRRS…GGCC). The span at 11–23 (QPPPKCTPKCPPK) shows a compositional bias: pro residues. Residues 95–104 (CCSQPSAGSS) are compositionally biased toward low complexity. The segment covering 105-118 (CCGGGSGQHSGGCC) has biased composition (gly residues).

This sequence belongs to the LCE family. In terms of tissue distribution, skin-specific. Expression was readily detected in adult trunk skin, adult arm skin, fetal skin, penal skin, vulva, esophagus and tongue. Not expressed in the cervix, rectum, lung, colon, or placenta. Expression is observed in the fibroblasts.

Its function is as follows. Precursors of the cornified envelope of the stratum corneum. This chain is Late cornified envelope protein 1F (LCE1F), found in Homo sapiens (Human).